The sequence spans 147 residues: D(1B) dopamine receptor (147 aa).

A helical membrane pass occupies residues 1-12; the sequence is SILISFPVQLNW. Topologically, residues 13-55 are extracellular; the sequence is HRDQAGSWGGLDLTNNLANWTPWEEDVWEPDVRAENCDSSLNR. N54 carries N-linked (GlcNAc...) asparagine glycosylation. The chain crosses the membrane as a helical span at residues 56-78; it reads TYAISSSLVSFYIPVAIMIVTYT. Residues 79-128 are Cytoplasmic-facing; the sequence is RIYRIAQVQIRRISSLERAAEHAQSCRSSAACAPDTSLRASIKKETKVLK. A helical membrane pass occupies residues 129-147; that stretch reads TLSVIMGVFVCCWLPFFIL.

It belongs to the G-protein coupled receptor 1 family.

It localises to the cell membrane. Functionally, dopamine receptor whose activity is mediated by G proteins which activate adenylyl cyclase. The chain is D(1B) dopamine receptor (DRD5) from Macaca mulatta (Rhesus macaque).